A 216-amino-acid polypeptide reads, in one-letter code: GTPase IMAP family member GIMD1 (216 aa).

The AIG1-type G domain occupies 5–216 (KMIINLAVLG…ENHFQVLSFT (212 aa)). GTP is bound by residues 14-22 (GKTQSGKSS), serine 35, and 147-149 (HAE).

This sequence belongs to the TRAFAC class TrmE-Era-EngA-EngB-Septin-like GTPase superfamily. AIG1/Toc34/Toc159-like paraseptin GTPase family. IAN subfamily.

The chain is GTPase IMAP family member GIMD1 (Gimd1) from Rattus norvegicus (Rat).